Here is a 96-residue protein sequence, read N- to C-terminus: Putative regulatory protein Teth514_1762 (96 aa).

The protein belongs to the RemA family.

In Thermoanaerobacter sp. (strain X514), this protein is Putative regulatory protein Teth514_1762.